Consider the following 301-residue polypeptide: Phosphoribosylaminoimidazole-succinocarboxamide synthase (301 aa).

It belongs to the SAICAR synthetase family.

It carries out the reaction 5-amino-1-(5-phospho-D-ribosyl)imidazole-4-carboxylate + L-aspartate + ATP = (2S)-2-[5-amino-1-(5-phospho-beta-D-ribosyl)imidazole-4-carboxamido]succinate + ADP + phosphate + 2 H(+). The protein operates within purine metabolism; IMP biosynthesis via de novo pathway; 5-amino-1-(5-phospho-D-ribosyl)imidazole-4-carboxamide from 5-amino-1-(5-phospho-D-ribosyl)imidazole-4-carboxylate: step 1/2. The protein is Phosphoribosylaminoimidazole-succinocarboxamide synthase of Syntrophobacter fumaroxidans (strain DSM 10017 / MPOB).